The primary structure comprises 225 residues: UPF0173 metal-dependent hydrolase PYRAB05000 (225 aa).

This sequence belongs to the UPF0173 family.

This chain is UPF0173 metal-dependent hydrolase PYRAB05000, found in Pyrococcus abyssi (strain GE5 / Orsay).